The following is a 468-amino-acid chain: 6-phosphogluconate dehydrogenase, decarboxylating (468 aa).

NADP(+) contacts are provided by residues 10–15 (GMAVMG), 33–35 (NRS), 74–76 (VKA), and Asn-102. Substrate is bound by residues Asn-102 and 128–130 (SGG). Lys-183 functions as the Proton acceptor in the catalytic mechanism. Position 186-187 (186-187 (HN)) interacts with substrate. Glu-190 functions as the Proton donor in the catalytic mechanism. The substrate site is built by Tyr-191, Lys-260, Arg-287, Arg-445, and His-451.

This sequence belongs to the 6-phosphogluconate dehydrogenase family. Homodimer.

The enzyme catalyses 6-phospho-D-gluconate + NADP(+) = D-ribulose 5-phosphate + CO2 + NADPH. The protein operates within carbohydrate degradation; pentose phosphate pathway; D-ribulose 5-phosphate from D-glucose 6-phosphate (oxidative stage): step 3/3. In terms of biological role, catalyzes the oxidative decarboxylation of 6-phosphogluconate to ribulose 5-phosphate and CO(2), with concomitant reduction of NADP to NADPH. The chain is 6-phosphogluconate dehydrogenase, decarboxylating (gnd) from Escherichia coli.